The following is a 962-amino-acid chain: Integrator complex subunit 7 (962 aa).

Phosphoserine is present on residues Ser338 and Ser809.

This sequence belongs to the Integrator subunit 7 family. Component of the Integrator complex, composed of core subunits INTS1, INTS2, INTS3, INTS4, INTS5, INTS6, INTS7, INTS8, INTS9/RC74, INTS10, INTS11/CPSF3L, INTS12, INTS13, INTS14 and INTS15. The core complex associates with protein phosphatase 2A subunits PPP2CA and PPP2R1A, to form the Integrator-PP2A (INTAC) complex. Interacts with NABP2.

The protein localises to the nucleus. The protein resides in the chromosome. Its subcellular location is the cytoplasm. Functionally, component of the integrator complex, a multiprotein complex that terminates RNA polymerase II (Pol II) transcription in the promoter-proximal region of genes. The integrator complex provides a quality checkpoint during transcription elongation by driving premature transcription termination of transcripts that are unfavorably configured for transcriptional elongation: the complex terminates transcription by (1) catalyzing dephosphorylation of the C-terminal domain (CTD) of Pol II subunit POLR2A/RPB1 and SUPT5H/SPT5, (2) degrading the exiting nascent RNA transcript via endonuclease activity and (3) promoting the release of Pol II from bound DNA. The integrator complex is also involved in terminating the synthesis of non-coding Pol II transcripts, such as enhancer RNAs (eRNAs), small nuclear RNAs (snRNAs), telomerase RNAs and long non-coding RNAs (lncRNAs). May be not involved in the recruitment of cytoplasmic dynein to the nuclear envelope by different components of the INT complex. Plays a role in DNA damage response (DDR) signaling during the S phase. The protein is Integrator complex subunit 7 of Homo sapiens (Human).